Consider the following 307-residue polypeptide: MTVAPEGRKLLRLEVRNAETPIERKPPWIRVRARMGPEYTELKSLVRREGLHTVCEEAGCPNIFECWEDREATFLIGGDQCTRRCDFCQIDTGKPAELDRDEPRRVADSVRTMGLRYATVTGVARDDLPDGGAWLYAETVRAIKELNPSTGVELLIPDFNGRPDRLAEVFGSRPEVLAHNVETVPRIFKRIRPAFTYRRSLDVLTAAREAGLVTKSNLILGLGETPDEVRTALADLRGAGCDIITITQYLRPSARHHPVERWVKPEEFVEFARHAEELGFSGVLAGPLVRSSYRAGRLYRQTARARA.

The [4Fe-4S] cluster site is built by C55, C60, C66, C81, C85, C88, and S292. Residues W67–S281 enclose the Radical SAM core domain.

This sequence belongs to the radical SAM superfamily. Lipoyl synthase family. [4Fe-4S] cluster is required as a cofactor.

It localises to the cytoplasm. The enzyme catalyses [[Fe-S] cluster scaffold protein carrying a second [4Fe-4S](2+) cluster] + N(6)-octanoyl-L-lysyl-[protein] + 2 oxidized [2Fe-2S]-[ferredoxin] + 2 S-adenosyl-L-methionine + 4 H(+) = [[Fe-S] cluster scaffold protein] + N(6)-[(R)-dihydrolipoyl]-L-lysyl-[protein] + 4 Fe(3+) + 2 hydrogen sulfide + 2 5'-deoxyadenosine + 2 L-methionine + 2 reduced [2Fe-2S]-[ferredoxin]. The protein operates within protein modification; protein lipoylation via endogenous pathway; protein N(6)-(lipoyl)lysine from octanoyl-[acyl-carrier-protein]: step 2/2. Its function is as follows. Catalyzes the radical-mediated insertion of two sulfur atoms into the C-6 and C-8 positions of the octanoyl moiety bound to the lipoyl domains of lipoate-dependent enzymes, thereby converting the octanoylated domains into lipoylated derivatives. This chain is Lipoyl synthase, found in Mycolicibacterium paratuberculosis (strain ATCC BAA-968 / K-10) (Mycobacterium paratuberculosis).